The sequence spans 277 residues: Shikimate dehydrogenase (NADP(+)) (277 aa).

Residues 18–20 (SKS) and Thr-65 contribute to the shikimate site. Lys-69 acts as the Proton acceptor in catalysis. Glu-81 serves as a coordination point for NADP(+). Residues Asn-90 and Asp-106 each coordinate shikimate. NADP(+)-binding positions include 130–134 (GAGGA), 154–159 (NRTFSK), and Met-217. Tyr-219 is a binding site for shikimate. An NADP(+)-binding site is contributed by Gly-241.

Belongs to the shikimate dehydrogenase family. Homodimer.

It carries out the reaction shikimate + NADP(+) = 3-dehydroshikimate + NADPH + H(+). The protein operates within metabolic intermediate biosynthesis; chorismate biosynthesis; chorismate from D-erythrose 4-phosphate and phosphoenolpyruvate: step 4/7. In terms of biological role, involved in the biosynthesis of the chorismate, which leads to the biosynthesis of aromatic amino acids. Catalyzes the reversible NADPH linked reduction of 3-dehydroshikimate (DHSA) to yield shikimate (SA). The sequence is that of Shikimate dehydrogenase (NADP(+)) from Vibrio vulnificus (strain CMCP6).